The following is a 116-amino-acid chain: Nitrogenase-stabilizing/protective protein NifW (116 aa).

The protein belongs to the NifW family. As to quaternary structure, homotrimer; associates with NifD.

Functionally, may protect the nitrogenase Fe-Mo protein from oxidative damage. The protein is Nitrogenase-stabilizing/protective protein NifW of Rhodopseudomonas palustris (strain ATCC BAA-98 / CGA009).